A 201-amino-acid chain; its full sequence is LexA repressor 1 (201 aa).

The H-T-H motif DNA-binding region spans 27-47 (LAEIAQAFGFASRNAAQKHVQ). Active-site for autocatalytic cleavage activity residues include serine 122 and lysine 159.

Belongs to the peptidase S24 family. Homodimer.

It catalyses the reaction Hydrolysis of Ala-|-Gly bond in repressor LexA.. Functionally, represses a number of genes involved in the response to DNA damage (SOS response), including recA and lexA. In the presence of single-stranded DNA, RecA interacts with LexA causing an autocatalytic cleavage which disrupts the DNA-binding part of LexA, leading to derepression of the SOS regulon and eventually DNA repair. The chain is LexA repressor 1 from Xanthomonas campestris pv. campestris (strain ATCC 33913 / DSM 3586 / NCPPB 528 / LMG 568 / P 25).